The chain runs to 124 residues: Small ribosomal subunit protein bS16 (124 aa).

A disordered region spans residues 80-124 (AGLAKRPARNNPTKAQPGKKAQERAAEAKQKAEEAAAAASEAAAE). Residues 99 to 113 (KAQERAAEAKQKAEE) show a composition bias toward basic and acidic residues. Positions 114–124 (AAAAASEAAAE) are enriched in low complexity.

It belongs to the bacterial ribosomal protein bS16 family.

In Rhizobium meliloti (strain 1021) (Ensifer meliloti), this protein is Small ribosomal subunit protein bS16.